Consider the following 216-residue polypeptide: Probable transaldolase (216 aa).

The active-site Schiff-base intermediate with substrate is the Lys84.

The protein belongs to the transaldolase family. Type 3B subfamily.

It is found in the cytoplasm. It catalyses the reaction D-sedoheptulose 7-phosphate + D-glyceraldehyde 3-phosphate = D-erythrose 4-phosphate + beta-D-fructose 6-phosphate. It functions in the pathway carbohydrate degradation; pentose phosphate pathway; D-glyceraldehyde 3-phosphate and beta-D-fructose 6-phosphate from D-ribose 5-phosphate and D-xylulose 5-phosphate (non-oxidative stage): step 2/3. Functionally, transaldolase is important for the balance of metabolites in the pentose-phosphate pathway. The chain is Probable transaldolase from Exiguobacterium sp. (strain ATCC BAA-1283 / AT1b).